Reading from the N-terminus, the 193-residue chain is Putative nitroreductase HBN1 (193 aa).

An N-acetylserine modification is found at Ser-2.

It belongs to the nitroreductase family. The cofactor is FMN.

The protein localises to the cytoplasm. Its subcellular location is the nucleus. The protein is Putative nitroreductase HBN1 (HBN1) of Saccharomyces cerevisiae (strain ATCC 204508 / S288c) (Baker's yeast).